We begin with the raw amino-acid sequence, 351 residues long: MAFFITSSPHAHSKKSTQTMMKMVALATIPGLLAQTYFFGWGTLLQVLLAIITAILAEAFVLKCRKRPLAPYLKDNSALLTGLLLALAIPPLSPWWLTVIGVFFAIVIAKHLYGGLGQNLFNPAMAAYVVLLISFPVQMTTWLPAKELLVEHISFMDSVWLIFHGLSQDGFSVHQLTMNVDGMTMATPLDTVKTGLKAGLTTNEILSAPIFNGFAGLGWLWVNVGFLLGGLFLLQQRLIHWHIPVSFLASLFIVSSLFAVFSPDTTTSPIFNLFSGATMLGAFFIATDPVSAATTNKGRLYYGALIGLLVYMIRSWGGFPDGVAFAVLLANMCVPLIDYYTKPRTYGHKKG.

The next 3 helical transmembrane spans lie at 37 to 57 (YFFG…AILA), 88 to 108 (AIPP…AIVI), and 123 to 143 (PAMA…TTWL). Thr-187 carries the FMN phosphoryl threonine modification. 4 helical membrane passes run 214 to 234 (FAGL…LFLL), 241 to 261 (WHIP…FAVF), 270 to 290 (IFNL…TDPV), and 300 to 317 (LYYG…RSWG).

Belongs to the NqrB/RnfD family. In terms of assembly, the complex is composed of six subunits: RnfA, RnfB, RnfC, RnfD, RnfE and RnfG. FMN serves as cofactor.

The protein localises to the cell inner membrane. Part of a membrane-bound complex that couples electron transfer with translocation of ions across the membrane. The polypeptide is Ion-translocating oxidoreductase complex subunit D (Aliivibrio salmonicida (strain LFI1238) (Vibrio salmonicida (strain LFI1238))).